The following is a 429-amino-acid chain: Aspartate--tRNA(Asp/Asn) ligase (429 aa).

Glu-166 contributes to the L-aspartate binding site. An aspartate region spans residues 188–191; it reads QLYK. Arg-210 contacts L-aspartate. Residues 210 to 212, 218 to 220, and Glu-352 contribute to the ATP site; these read RAE and RHL. Mg(2+) is bound by residues Glu-352 and Ser-355. L-aspartate-binding residues include Ser-355 and Arg-359. 400–403 lines the ATP pocket; the sequence is GAER.

This sequence belongs to the class-II aminoacyl-tRNA synthetase family. Type 2 subfamily. Homodimer. Requires Mg(2+) as cofactor.

The protein localises to the cytoplasm. It carries out the reaction tRNA(Asx) + L-aspartate + ATP = L-aspartyl-tRNA(Asx) + AMP + diphosphate. Aspartyl-tRNA synthetase with relaxed tRNA specificity since it is able to aspartylate not only its cognate tRNA(Asp) but also tRNA(Asn). Reaction proceeds in two steps: L-aspartate is first activated by ATP to form Asp-AMP and then transferred to the acceptor end of tRNA(Asp/Asn). This is Aspartate--tRNA(Asp/Asn) ligase from Methanocorpusculum labreanum (strain ATCC 43576 / DSM 4855 / Z).